Here is a 463-residue protein sequence, read N- to C-terminus: Ribosomal protein uS12 methylthiotransferase RimO (463 aa).

Positions 15-130 constitute an MTTase N-terminal domain; it reads PKVGFVSLGC…VMQAVHSHLP (116 aa). Positions 24, 60, 89, 161, 165, and 168 each coordinate [4Fe-4S] cluster. Positions 147 to 392 constitute a Radical SAM core domain; it reads LTPRHYAYLK…MEVAEQVSAK (246 aa). The 69-residue stretch at 395-463 folds into the TRAM domain; sequence ARKVGKTLKV…ADGHDLWGEV (69 aa).

The protein belongs to the methylthiotransferase family. RimO subfamily. [4Fe-4S] cluster is required as a cofactor.

The protein resides in the cytoplasm. The enzyme catalyses L-aspartate(89)-[ribosomal protein uS12]-hydrogen + (sulfur carrier)-SH + AH2 + 2 S-adenosyl-L-methionine = 3-methylsulfanyl-L-aspartate(89)-[ribosomal protein uS12]-hydrogen + (sulfur carrier)-H + 5'-deoxyadenosine + L-methionine + A + S-adenosyl-L-homocysteine + 2 H(+). Its function is as follows. Catalyzes the methylthiolation of an aspartic acid residue of ribosomal protein uS12. The polypeptide is Ribosomal protein uS12 methylthiotransferase RimO (Paraburkholderia phymatum (strain DSM 17167 / CIP 108236 / LMG 21445 / STM815) (Burkholderia phymatum)).